Reading from the N-terminus, the 300-residue chain is Ribonuclease HIII (300 aa).

An RNase H type-2 domain is found at 83–300 (IPIIGSDEVG…THKAQALLTK (218 aa)). The a divalent metal cation site is built by Asp-89, Glu-90, and Asp-194.

This sequence belongs to the RNase HII family. RnhC subfamily. Mn(2+) serves as cofactor. It depends on Mg(2+) as a cofactor.

Its subcellular location is the cytoplasm. The catalysed reaction is Endonucleolytic cleavage to 5'-phosphomonoester.. In terms of biological role, endonuclease that specifically degrades the RNA of RNA-DNA hybrids. This Streptococcus pyogenes serotype M49 (strain NZ131) protein is Ribonuclease HIII.